The primary structure comprises 254 residues: Thiazole synthase (254 aa).

The Schiff-base intermediate with DXP role is filled by Lys-95. Residues Gly-156, 182-183 (AG), and 204-205 (NT) each bind 1-deoxy-D-xylulose 5-phosphate.

This sequence belongs to the ThiG family. In terms of assembly, homotetramer. Forms heterodimers with either ThiH or ThiS.

It localises to the cytoplasm. It carries out the reaction [ThiS sulfur-carrier protein]-C-terminal-Gly-aminoethanethioate + 2-iminoacetate + 1-deoxy-D-xylulose 5-phosphate = [ThiS sulfur-carrier protein]-C-terminal Gly-Gly + 2-[(2R,5Z)-2-carboxy-4-methylthiazol-5(2H)-ylidene]ethyl phosphate + 2 H2O + H(+). The protein operates within cofactor biosynthesis; thiamine diphosphate biosynthesis. Its function is as follows. Catalyzes the rearrangement of 1-deoxy-D-xylulose 5-phosphate (DXP) to produce the thiazole phosphate moiety of thiamine. Sulfur is provided by the thiocarboxylate moiety of the carrier protein ThiS. In vitro, sulfur can be provided by H(2)S. The sequence is that of Thiazole synthase from Shewanella putrefaciens (strain CN-32 / ATCC BAA-453).